The primary structure comprises 78 residues: Acyl carrier protein (78 aa).

The Carrier domain occupies 2 to 77; sequence SNIEQQVKKI…LAIDYINAHN (76 aa). The residue at position 37 (S37) is an O-(pantetheine 4'-phosphoryl)serine.

The protein belongs to the acyl carrier protein (ACP) family. 4'-phosphopantetheine is transferred from CoA to a specific serine of apo-ACP by AcpS. This modification is essential for activity because fatty acids are bound in thioester linkage to the sulfhydryl of the prosthetic group.

Its subcellular location is the cytoplasm. The protein operates within lipid metabolism; fatty acid biosynthesis. Functionally, carrier of the growing fatty acid chain in fatty acid biosynthesis. The protein is Acyl carrier protein of Neisseria meningitidis serogroup C / serotype 2a (strain ATCC 700532 / DSM 15464 / FAM18).